Here is a 199-residue protein sequence, read N- to C-terminus: Chromophore lyase CpcT/CpeT 2 (199 aa).

It belongs to the CpcT/CpeT biliprotein lyase family.

Functionally, covalently attaches a chromophore to Cys residue(s) of phycobiliproteins. This Synechococcus sp. (strain JA-3-3Ab) (Cyanobacteria bacterium Yellowstone A-Prime) protein is Chromophore lyase CpcT/CpeT 2.